The chain runs to 391 residues: Phosphoprotein (391 aa).

A phosphothreonine mark is found at T10, T16, and T39. A Phosphoserine modification is found at S69. Disordered stretches follow at residues 82-101 (SSSE…FAQT) and 143-208 (PRTS…PANV). Phosphothreonine is present on residues T91, T150, and T165. S188 bears the Phosphoserine mark. Residues 198–208 (LPQQDSTPANV) are compositionally biased toward polar residues. The stretch at 218-245 (ANEIMDLLRGMDARLQHLEQKVDKVLAQ) forms a coiled coil. T250 is subject to Phosphothreonine. S257 carries the phosphoserine modification. 2 positions are modified to phosphothreonine: T258 and T282. Phosphoserine is present on residues S292 and S294. At T298 the chain carries Phosphothreonine. S301 and S374 each carry phosphoserine. The segment at 343–391 (AGRKVMITKMITDCVANPQMKQAFEQRLAKASTEDALNDIKRDIIRSAI) is interaction with the nucleoprotein. Residues 348 to 391 (MITKMITDCVANPQMKQAFEQRLAKASTEDALNDIKRDIIRSAI) form a x domain (XD) region. Residue T375 is modified to Phosphothreonine.

This sequence belongs to the rubulavirus/avulavirus P protein family. In terms of assembly, homotetramer. Interacts (via multimerization domain) with polymerase L; this interaction forms the polymerase L-P complex. Interacts (via N-terminus) with N0 (via Ncore); this interaction allows P to chaperon N0 to avoid N polymerization before encapsidation. Interacts (via C-terminus) with N-RNA template; this interaction positions the polymerase on the template for both transcription and replication. Interacts with host RPS6KB1 kinase; this interaction may play a role in the viral replication and transcription.

Its subcellular location is the virion. Functionally, essential cofactor of the RNA polymerase L that plays a central role in the transcription and replication by forming the polymerase complex with RNA polymerase L and recruiting L to the genomic N-RNA template for RNA synthesis. Also plays a central role in the encapsidation of nascent RNA chains by forming the encapsidation complex with the nucleocapsid protein N (N-P complex). Acts as a chaperone for newly synthesized free N protein, so-called N0, allowing encapsidation of nascent RNA chains during replication. The nucleoprotein protein N prevents excessive phosphorylation of P, which leads to down-regulation of viral transcription/ replication. Participates, together with N, in the formation of viral factories (viroplasms), which are large inclusions in the host cytoplasm where replication takes place. This is Phosphoprotein (V/P) from Mumps orthorubulavirus (MuV).